Reading from the N-terminus, the 1039-residue chain is Multidrug resistance protein MdtB (1039 aa).

The next 12 membrane-spanning stretches (helical) occupy residues 16-36 (FILRPVATTLLMVAILLAGII), 342-362 (DVQFELLLAVALVVMVIYVFL), 373-393 (VAVPLSLIGTFAAMYFLGFSI), 396-416 (LTLMALTIATGFVVDDAIVVI), 440-460 (IGFTIISLTFSLVAVLIPLLF), 472-492 (FAVTLAVAILISAVVSLTLTP), 537-557 (WLTLGVAFSTLLLTVLLYLLI), 863-883 (LGGTLWLILAAVVAMYIVLGV), 888-908 (FIHPVTILSTLPTAGVGALLA), 911-931 (MAGSELDVIAIIGIILLIGIV), 968-988 (ILMTTLAALLGALPLMLSTGV), and 1002-1022 (GGLVMSQILTLFTTPVIYLLF).

This sequence belongs to the resistance-nodulation-cell division (RND) (TC 2.A.6) family. MdtB subfamily. As to quaternary structure, part of a tripartite efflux system composed of MdtA, MdtB and MdtC. MdtB forms a heteromultimer with MdtC.

The protein localises to the cell inner membrane. The sequence is that of Multidrug resistance protein MdtB from Serratia proteamaculans (strain 568).